Here is a 152-residue protein sequence, read N- to C-terminus: Superoxide dismutase [Cu-Zn] 1 (152 aa).

H45, H47, and H62 together coordinate Cu cation. C56 and C145 are oxidised to a cystine. Residues H62, H70, H79, and D82 each contribute to the Zn(2+) site. Position 119 (H119) interacts with Cu cation.

This sequence belongs to the Cu-Zn superoxide dismutase family. As to quaternary structure, homodimer. Cu cation is required as a cofactor. It depends on Zn(2+) as a cofactor.

Its subcellular location is the cytoplasm. It catalyses the reaction 2 superoxide + 2 H(+) = H2O2 + O2. Its function is as follows. Destroys radicals which are normally produced within the cells and which are toxic to biological systems. The sequence is that of Superoxide dismutase [Cu-Zn] 1 (SODCC.1) from Mesembryanthemum crystallinum (Common ice plant).